The following is a 649-amino-acid chain: MSSFGAGKTKEVIFSVEDGSVKMFLRGRPVPMMIPDELAPTYSLDTRSELPSCRLKLEWVYGYRGRDCRANLYLLPTGEIVYFVASVAVLYSVEEQRQRHYLGHNDDIKCLAIHPDMVTIATGQVAGTTKEGKPLPPHVRIWDSVSLSTLHVLGLGVFDRAVCCVGFSKSNGGNLLCAVDESNDHMLSVWDWAKETKVVDVKCSNEAVLVATFHPTDPTVLITCGKSHIYFWTLEGGSLSKRQGLFEKHEKPKYVLCVTFLEGGDVVTGDSGGNLYVWGKGGNRITQAVLGAHDGGVFGLCALRDGTLVSGGGRDRRVVLWGSDYSKLQEVEVPEDFGPVRTVAEGHGDTLYVGTTRNSILQGSVHTGFSLLVQGHVEELWGLATHPSRAQFVTCGQDKLVHLWSSDSHQPLWSRIIEDPARSAGFHPSGSVLAVGTVTGRWLLLDTETHDLVAIHTDGNEQISVVSFSPDGAYLAVGSHDNLVYVYTVDQGGRKVSRLGKCSGHSSFITHLDWAQDSSCFVTNSGDYEILYWDPATCKQITSADAVRNMEWATATCVLGFGVFGIWSEGADGTDINAVARSHDGKLLASADDFGKVHLFSYPCCQPRALSHKYGGHSSHVTNVAFLWDDSMALTTGGKDTSVLQWRVV.

The tandem atypical propeller in EMLs stretch occupies residues 10–649; the sequence is KEVIFSVEDG…DTSVLQWRVV (640 aa). 2 coiled-coil regions span residues 13–58 and 73–114; these read IFSV…LKLE and YLLP…LAIH. WD repeat units follow at residues 56–93, 97–144, 151–192, 195–234, 241–280, 285–323, 369–406, 410–447, 452–489, 495–535, 564–602, and 609–648; these read KLEW…LYSV, RQRH…IWDS, HVLG…VWDW, ETKV…FWTL, KRQG…VWGK, ITQA…LWGS, FSLL…LWSS, QPLW…LLDT, LVAI…VYTV, KVSR…YWDP, FGIW…LFSY, and ALSH…QWRV.

Belongs to the WD repeat EMAP family. In terms of assembly, homotrimer; self-association is mediated by the N-terminal coiled coil. Interacts with GRID2 and may also interact with GRID1. Interacts with EML3. Binds unpolymerized tubulins via its WD repeat region. Ubiquitous.

The protein resides in the cytoplasm. The protein localises to the cytoskeleton. It localises to the spindle. Tubulin binding protein that inhibits microtubule nucleation and growth, resulting in shorter microtubules. In Homo sapiens (Human), this protein is Echinoderm microtubule-associated protein-like 2 (EML2).